The following is a 190-amino-acid chain: Cancer-related nucleoside-triphosphatase (190 aa).

Ala-2 carries the N-acetylalanine modification. ATP-binding positions include 9–16 (GPPGVGKT) and 109–116 (VCVIDEIG). An N6-acetyllysine modification is found at Lys-165.

It belongs to the THEP1 NTPase family. As to quaternary structure, monomer.

The catalysed reaction is a ribonucleoside 5'-triphosphate + H2O = a ribonucleoside 5'-diphosphate + phosphate + H(+). The enzyme catalyses 5-methyl-UTP + H2O = 5-methyl-UDP + phosphate + H(+). It catalyses the reaction CTP + H2O = CDP + phosphate + H(+). It carries out the reaction ATP + H2O = ADP + phosphate + H(+). The catalysed reaction is GTP + H2O = GDP + phosphate + H(+). Its function is as follows. Has nucleotide phosphatase activity towards ATP, GTP, CTP, TTP and UTP. Hydrolyzes nucleoside diphosphates with lower efficiency. The chain is Cancer-related nucleoside-triphosphatase from Homo sapiens (Human).